We begin with the raw amino-acid sequence, 320 residues long: Olfactory receptor 2AT4 (320 aa).

Topologically, residues 1-31 (MDATACNESVDGSPVFYLLGIPSLPETFFLP) are extracellular. N-linked (GlcNAc...) asparagine glycosylation is present at N7. The helical transmembrane segment at 32–52 (VFFIFLLFYLLILMGNALILV) threads the bilayer. Topologically, residues 53-62 (AVVAEPSLHK) are cytoplasmic. A helical membrane pass occupies residues 63–83 (PMYFFLINLSTLDILFTTTTV). Over 84-102 (PKMLSLFLLGDRFLSFSSC) the chain is Extracellular. A disulfide bond links C102 and C184. The helical transmembrane segment at 103-123 (LLQMYLFQSFTCSEAFILVVM) threads the bilayer. Residues 124–145 (AYDRYVAICHPLHYPVLMNPQT) are Cytoplasmic-facing. The chain crosses the membrane as a helical span at residues 146–166 (NATLAASAWLTALLLPIPAVV). At 167 to 200 (RTSQMAYNSIAYIYHCFCDHLAVVQASCSDTTPQ) the chain is on the extracellular side. A helical transmembrane segment spans residues 201 to 221 (TLMGFCIAMVVSFLPLLLVLL). The Cytoplasmic portion of the chain corresponds to 222-245 (SYVHILASVLRISSLEGRAKAFST). Residues 246-266 (CSSHLLVVGTYYSSIAIAYVA) form a helical membrane-spanning segment. Residues 267-276 (YRADLPLDFH) lie on the Extracellular side of the membrane. The helical transmembrane segment at 277–297 (IMGNVVYAILTPILNPLIYTL) threads the bilayer. The Cytoplasmic segment spans residues 298–320 (RNRDVKAAITKIMSQDPGCDRSI).

The protein belongs to the G-protein coupled receptor 1 family. Detected in the keratinocytes of the epidermis (at protein level). Detected in hair follicles in proximal outer root sheath and hair matrix keratinocytes (at protein level).

It is found in the cell membrane. Functionally, olfactory receptor. Activated by the synthetic sandalwood odorant sandalore. Endogenous ligand is unknown. The activity of this receptor is probably mediated by G proteins which induce elevation of intracellular Ca(2+), a cAMP-dependent pathway and phosphorylation of MAPK1/ERK2, MAPK3/ERK1 and p38 MAPKs. Activation of OR2AT4 induces proliferation, migration, and re-epithelialization during wound-healing processes of keratinocytes. Stimulation of OR2AT4 by sandalore promotes hair growth by decreasing apoptosis and increasing production of the anagen-prolonging growth factor IGF1 as well as other pathways involving various kinases. In Homo sapiens (Human), this protein is Olfactory receptor 2AT4.